The sequence spans 435 residues: Protein CHLOROPLAST IMPORT APPARATUS 2 (435 aa).

The N-terminal 59 residues, 1–59 (MSACLSSGGGGAAAYSFELEKVKSPPPSSSTTTTRATSPSSTISESSNSPLAISTRKPR), are a transit peptide targeting the chloroplast. 2 disordered regions span residues 21–66 (KVKS…KRPN) and 412–435 (ADQRPRMKGRFVRRPNESTPSGQR). Residues 29–49 (SSTTTTRATSPSSTISESSNS) show a composition bias toward low complexity. Basic residues predominate over residues 56-65 (RKPRTQRKRP). Residues 383–425 (REASVLRYKEKRRTRLFSKKIRYQVRKLNADQRPRMKGRFVRR) form the CCT domain.

Expressed in leaves and young flower buds.

It localises to the plastid. The protein resides in the chloroplast. Its subcellular location is the nucleus. Its function is as follows. Responsible for specific up-regulation of the translocon genes TOC33 and TOC75 in leaves. Involved in the general chloroplast protein import pathway regulation, including protein import and protein translation efficiencies. The sequence is that of Protein CHLOROPLAST IMPORT APPARATUS 2 (CIA2) from Arabidopsis thaliana (Mouse-ear cress).